Here is a 152-residue protein sequence, read N- to C-terminus: Small ribosomal subunit protein bS16 (152 aa).

Positions 118–130 (AEKHKAKASEKKA) are enriched in basic and acidic residues. Residues 118 to 152 (AEKHKAKASEKKAAAAASADEAGSAAADDAEGSES) are disordered. A compositionally biased stretch (low complexity) spans 131–144 (AAAASADEAGSAAA).

Belongs to the bacterial ribosomal protein bS16 family.

This is Small ribosomal subunit protein bS16 from Beutenbergia cavernae (strain ATCC BAA-8 / DSM 12333 / CCUG 43141 / JCM 11478 / NBRC 16432 / NCIMB 13614 / HKI 0122).